Here is a 375-residue protein sequence, read N- to C-terminus: MKILVDENMPYAEELFRRLGDVQAVPGRPIPRDALVDADALMVRSVTKVNEALLHGTSIGFVGTATAGTDHVDDTWLRQQGIGFSAAPGCNAIAVVEYVFSALMMMAERDGFQLRDKTVGIIGVGNVGSRLNARLQALGVRTLLCDPPRADRGDNEAFWPLEKLVREADVLTFHTPLNKTGAYQSLHMADDELLAALPDGRILINACRGAVVDNAALLRALEKGKKLSVVLDVWEPEPDLSLPLLARVDIGTPHIAGYTLEGKARGTTQVFEAFSQHLGQPQSVELASLLPVPEFSHLRLNGELDEGKLKRLMHLVYDVRRDDAPLRHVAGLPGEFDRLRKHYQERREWSSLCVQCDDATSAGLLQQLGFTTQLL.

Substrate contacts are provided by Ser45 and Thr66. Asp146 and Thr175 together coordinate NAD(+). The active site involves Arg208. Asp232 lines the NAD(+) pocket. Glu237 is a catalytic residue. The Proton donor role is filled by His254. An NAD(+)-binding site is contributed by Gly257. Tyr258 is a binding site for substrate.

Belongs to the D-isomer specific 2-hydroxyacid dehydrogenase family. PdxB subfamily. Homodimer.

It localises to the cytoplasm. The catalysed reaction is 4-phospho-D-erythronate + NAD(+) = (R)-3-hydroxy-2-oxo-4-phosphooxybutanoate + NADH + H(+). It functions in the pathway cofactor biosynthesis; pyridoxine 5'-phosphate biosynthesis; pyridoxine 5'-phosphate from D-erythrose 4-phosphate: step 2/5. Its function is as follows. Catalyzes the oxidation of erythronate-4-phosphate to 3-hydroxy-2-oxo-4-phosphonooxybutanoate. The chain is Erythronate-4-phosphate dehydrogenase from Yersinia pseudotuberculosis serotype O:1b (strain IP 31758).